A 264-amino-acid chain; its full sequence is S-adenosylmethionine decarboxylase proenzyme (264 aa).

The active-site Schiff-base intermediate with substrate; via pyruvic acid is the serine 112. Residue serine 112 is modified to Pyruvic acid (Ser); by autocatalysis. Catalysis depends on histidine 117, which acts as the Proton acceptor; for processing activity. Cysteine 140 functions as the Proton donor; for catalytic activity in the catalytic mechanism.

This sequence belongs to the prokaryotic AdoMetDC family. Type 2 subfamily. As to quaternary structure, heterooctamer of four alpha and four beta chains arranged as a tetramer of alpha/beta heterodimers. Pyruvate is required as a cofactor. Is synthesized initially as an inactive proenzyme. Formation of the active enzyme involves a self-maturation process in which the active site pyruvoyl group is generated from an internal serine residue via an autocatalytic post-translational modification. Two non-identical subunits are generated from the proenzyme in this reaction, and the pyruvate is formed at the N-terminus of the alpha chain, which is derived from the carboxyl end of the proenzyme. The post-translation cleavage follows an unusual pathway, termed non-hydrolytic serinolysis, in which the side chain hydroxyl group of the serine supplies its oxygen atom to form the C-terminus of the beta chain, while the remainder of the serine residue undergoes an oxidative deamination to produce ammonia and the pyruvoyl group blocking the N-terminus of the alpha chain.

It carries out the reaction S-adenosyl-L-methionine + H(+) = S-adenosyl 3-(methylsulfanyl)propylamine + CO2. It participates in amine and polyamine biosynthesis; S-adenosylmethioninamine biosynthesis; S-adenosylmethioninamine from S-adenosyl-L-methionine: step 1/1. Catalyzes the decarboxylation of S-adenosylmethionine to S-adenosylmethioninamine (dcAdoMet), the propylamine donor required for the synthesis of the polyamines spermine and spermidine from the diamine putrescine. The sequence is that of S-adenosylmethionine decarboxylase proenzyme from Photorhabdus laumondii subsp. laumondii (strain DSM 15139 / CIP 105565 / TT01) (Photorhabdus luminescens subsp. laumondii).